Here is a 537-residue protein sequence, read N- to C-terminus: Glucans biosynthesis protein D 2 (537 aa).

Residues 1–28 (MVTRRHLLASASLSATLAALGITPEALA) constitute a signal peptide (tat-type signal).

This sequence belongs to the OpgD/OpgG family. Predicted to be exported by the Tat system. The position of the signal peptide cleavage has not been experimentally proven.

Its subcellular location is the periplasm. The protein operates within glycan metabolism; osmoregulated periplasmic glucan (OPG) biosynthesis. Functionally, probably involved in the control of the structural glucose backbone of osmoregulated periplasmic glucans (OPGs). The chain is Glucans biosynthesis protein D 2 (opgD2) from Ralstonia nicotianae (strain ATCC BAA-1114 / GMI1000) (Ralstonia solanacearum).